The sequence spans 248 residues: Adenosylcobinamide-GDP ribazoletransferase (248 aa).

A run of 6 helical transmembrane segments spans residues 36–56 (FFLPVVASIIGGMEFLIYLGL), 59–79 (FLPPNVIIVLLLLFTAMITGG), 113–133 (FGTIAMIINLLLKYQLLYSLV), 137–157 (CSIAIILAPVIGRISILFLCL), 170–190 (IFIGNMSKPIIFLITIIALAM), and 199–219 (ITIISFTAVLIITYLFYLLCL).

This sequence belongs to the CobS family. The cofactor is Mg(2+).

The protein resides in the cell membrane. It carries out the reaction alpha-ribazole + adenosylcob(III)inamide-GDP = adenosylcob(III)alamin + GMP + H(+). The catalysed reaction is alpha-ribazole 5'-phosphate + adenosylcob(III)inamide-GDP = adenosylcob(III)alamin 5'-phosphate + GMP + H(+). Its pathway is cofactor biosynthesis; adenosylcobalamin biosynthesis; adenosylcobalamin from cob(II)yrinate a,c-diamide: step 7/7. In terms of biological role, joins adenosylcobinamide-GDP and alpha-ribazole to generate adenosylcobalamin (Ado-cobalamin). Also synthesizes adenosylcobalamin 5'-phosphate from adenosylcobinamide-GDP and alpha-ribazole 5'-phosphate. In Clostridium botulinum (strain 657 / Type Ba4), this protein is Adenosylcobinamide-GDP ribazoletransferase.